Here is a 345-residue protein sequence, read N- to C-terminus: MKEFDLESYDYYLPKELIANYPVLPKEKAKLLVYERRSQTITHTTFEHVLDFFPKNALIVLNDTKVMKARLFGSKHAFLPSKTTEVFFHRFFKDNTALTQIKGKIKVGDKIFFDENYYAEVLELLHNGQRLIAFYDNQTPLNQENILKLLEQYGHMPLPPYIKRADESLDAHEYQSVFAKHTGAVAAPTASLHFSQHGLEKLLKDFKHAFLTLHVGAGTFLGVETKDIREHQIHTEVLRIPKKSQEILQKSQEILCIGTTALRSVEYFKRLENPNQEAFECDIFLHLANPILHVNYLLTNFHLPKSSLLMLVSAMIGLEKTKEIYKIAIEKKYRFYSYGDGMLIL.

Belongs to the QueA family. As to quaternary structure, monomer.

It localises to the cytoplasm. The catalysed reaction is 7-aminomethyl-7-carbaguanosine(34) in tRNA + S-adenosyl-L-methionine = epoxyqueuosine(34) in tRNA + adenine + L-methionine + 2 H(+). It functions in the pathway tRNA modification; tRNA-queuosine biosynthesis. In terms of biological role, transfers and isomerizes the ribose moiety from AdoMet to the 7-aminomethyl group of 7-deazaguanine (preQ1-tRNA) to give epoxyqueuosine (oQ-tRNA). In Helicobacter pylori (strain G27), this protein is S-adenosylmethionine:tRNA ribosyltransferase-isomerase.